We begin with the raw amino-acid sequence, 311 residues long: Aspartate carbamoyltransferase catalytic subunit (311 aa).

2 residues coordinate carbamoyl phosphate: R55 and T56. Residue K85 coordinates L-aspartate. Carbamoyl phosphate is bound by residues R106, H135, and Q138. L-aspartate is bound by residues R168 and R230. L268 and P269 together coordinate carbamoyl phosphate.

The protein belongs to the aspartate/ornithine carbamoyltransferase superfamily. ATCase family. In terms of assembly, heterododecamer (2C3:3R2) of six catalytic PyrB chains organized as two trimers (C3), and six regulatory PyrI chains organized as three dimers (R2).

The catalysed reaction is carbamoyl phosphate + L-aspartate = N-carbamoyl-L-aspartate + phosphate + H(+). The protein operates within pyrimidine metabolism; UMP biosynthesis via de novo pathway; (S)-dihydroorotate from bicarbonate: step 2/3. In terms of biological role, catalyzes the condensation of carbamoyl phosphate and aspartate to form carbamoyl aspartate and inorganic phosphate, the committed step in the de novo pyrimidine nucleotide biosynthesis pathway. In Proteus mirabilis (strain HI4320), this protein is Aspartate carbamoyltransferase catalytic subunit.